Here is a 392-residue protein sequence, read N- to C-terminus: Probable nucleoredoxin 3 (392 aa).

Thioredoxin domains follow at residues 17–171 and 177–326; these read LYSI…DSKR and EKLL…ELKA.

This sequence belongs to the nucleoredoxin family.

It carries out the reaction [protein]-dithiol + NAD(+) = [protein]-disulfide + NADH + H(+). The catalysed reaction is [protein]-dithiol + NADP(+) = [protein]-disulfide + NADPH + H(+). Its function is as follows. Probable thiol-disulfide oxidoreductase that may participate in various redox reactions. The polypeptide is Probable nucleoredoxin 3 (Arabidopsis thaliana (Mouse-ear cress)).